Reading from the N-terminus, the 154-residue chain is Heat shock protein beta-3 (154 aa).

Positions 48–71 are disordered; sequence ARGAGTPQALAEDSASTEKPPGEG. A sHSP domain is found at 57 to 154; that stretch reads LAEDSASTEK…VEVKDSLGTK (98 aa).

It belongs to the small heat shock protein (HSP20) family.

Its subcellular location is the cytoplasm. It is found in the nucleus. In terms of biological role, inhibitor of actin polymerization. The sequence is that of Heat shock protein beta-3 (Hspb3) from Mus musculus (Mouse).